Consider the following 336-residue polypeptide: Poly(A) RNA polymerase cid12 (336 aa).

Mg(2+)-binding residues include Asp77 and Asp79. Residues 209–263 form the PAP-associated domain; sequence ALLQKFFYFWGVEWTYELFVLRPLTGQIVPKLQKGWLNEVQPNLLSIEDPIDRNN. The residue at position 325 (Ser325) is a Phosphoserine. Thr327 carries the post-translational modification Phosphothreonine. The residue at position 329 (Ser329) is a Phosphoserine.

Belongs to the DNA polymerase type-B-like family. As to quaternary structure, cid12, hrr1 and rdp1 interact forming the RNA-directed RNA polymerase complex (RDRC). The RDRC complex interacts with the RITS complex via interaction between ago1 and hrr1. Clr4 has a role in mediating this interaction. Mg(2+) serves as cofactor. The cofactor is Mn(2+).

It localises to the cytoplasm. The protein resides in the nucleus. The enzyme catalyses RNA(n) + ATP = RNA(n)-3'-adenine ribonucleotide + diphosphate. In terms of biological role, has a role in the RNA interference (RNAi) pathway which is important for heterochromatin formation and accurate chromosome segregation. A member of the RNA-directed RNA polymerase complex (RDRC) which is involved in the generation of small interfering RNAs (siRNAs) and mediate their association with the RNA-induced transcriptional silencing (RITS) complex. RITS acts as a priming complex for dsRNA synthesis at the site of non-coding centromeric RNA. This chain is Poly(A) RNA polymerase cid12 (cid12), found in Schizosaccharomyces pombe (strain 972 / ATCC 24843) (Fission yeast).